Consider the following 208-residue polypeptide: Uridine kinase (208 aa).

12–19 provides a ligand contact to ATP; it reads GGSGGGKT.

Belongs to the uridine kinase family.

It localises to the cytoplasm. It carries out the reaction uridine + ATP = UMP + ADP + H(+). It catalyses the reaction cytidine + ATP = CMP + ADP + H(+). It participates in pyrimidine metabolism; CTP biosynthesis via salvage pathway; CTP from cytidine: step 1/3. Its pathway is pyrimidine metabolism; UMP biosynthesis via salvage pathway; UMP from uridine: step 1/1. This is Uridine kinase from Streptococcus pyogenes serotype M18 (strain MGAS8232).